The primary structure comprises 89 residues: Dolichol-phosphate mannose synthase subunit 3 (89 aa).

The next 2 helical transmembrane spans lie at 7–27 (ILSL…AAII) and 33–53 (WLLP…MVGV).

Belongs to the DPM3 family. As to quaternary structure, component of the dolichol-phosphate mannose (DPM) synthase complex composed of DPMS1, DPMS2 and DPMS3; in the complex interacts directly with DPMS1 and DPMS2.

The protein resides in the endoplasmic reticulum membrane. Its pathway is protein modification; protein glycosylation. Its function is as follows. Regulates the biosynthesis of dolichol phosphate-mannose. Regulatory subunit of the dolichol-phosphate mannose (DPM) synthase complex; essential for the ER localization and stable expression of DPMS1. The polypeptide is Dolichol-phosphate mannose synthase subunit 3 (Arabidopsis thaliana (Mouse-ear cress)).